Here is a 341-residue protein sequence, read N- to C-terminus: Biotin synthase (341 aa).

The Radical SAM core domain maps to Asn-53–Lys-272. Positions 68, 72, and 75 each coordinate [4Fe-4S] cluster. Cys-112, Cys-143, Cys-203, and Arg-276 together coordinate [2Fe-2S] cluster.

This sequence belongs to the radical SAM superfamily. Biotin synthase family. In terms of assembly, homodimer. Requires [4Fe-4S] cluster as cofactor. [2Fe-2S] cluster is required as a cofactor.

It catalyses the reaction (4R,5S)-dethiobiotin + (sulfur carrier)-SH + 2 reduced [2Fe-2S]-[ferredoxin] + 2 S-adenosyl-L-methionine = (sulfur carrier)-H + biotin + 2 5'-deoxyadenosine + 2 L-methionine + 2 oxidized [2Fe-2S]-[ferredoxin]. It functions in the pathway cofactor biosynthesis; biotin biosynthesis; biotin from 7,8-diaminononanoate: step 2/2. Its function is as follows. Catalyzes the conversion of dethiobiotin (DTB) to biotin by the insertion of a sulfur atom into dethiobiotin via a radical-based mechanism. In Nitrobacter winogradskyi (strain ATCC 25391 / DSM 10237 / CIP 104748 / NCIMB 11846 / Nb-255), this protein is Biotin synthase.